The following is a 546-amino-acid chain: MAELTIDPATIRKALDDFVEAYTPSETPTQEVGHVATAGDGIAHVTGLPGCMANELLTFEDGTLGLAFNLDAREIGVVILGDFVGIEEGQEVRRTGEVLSVPVGDGFLGRVVDPLGRPIDGMGEIKSEGRRILEAQAPDVMHRHPVDQPMSTGLKAIDAMTPIGRGQRQLIIGDRQTGKTAIAIDTIINQKKNWESGDPKKQVRCIYVAIGQKGSTIASVKQSLEEAGAMEYTTIVASPASDSAGFKYIAPYTGSAIGQHWMYNGKDVLIVFDDLSKQAEAYRSISLLLRRPPGREAYPGDVFYLHSRLLERCARVSDDLGGGSMTGLPIVETKANDVSAYIPTNVISITDGQIFLQSDLFNAGQRPAVDVGISVSRVGGAAQTKALKKVSGTLKISLARYRSLESFAMFASDLDAASKAQLNRGARLTELLKQPQFSPYSMEQEVVSVWAGTHGKFDDLAIADVLPFEHGLLEYVDRNTDILTTIRDTGDFTKETEEALDKAVDAFRETYVTKAGKPLVDKKTAPKSVTPVDQEQIKAGKAQEKK.

173–180 (GDRQTGKT) provides a ligand contact to ATP. The tract at residues 520-546 (VDKKTAPKSVTPVDQEQIKAGKAQEKK) is disordered. Positions 535-546 (EQIKAGKAQEKK) are enriched in basic and acidic residues.

This sequence belongs to the ATPase alpha/beta chains family. In terms of assembly, F-type ATPases have 2 components, CF(1) - the catalytic core - and CF(0) - the membrane proton channel. CF(1) has five subunits: alpha(3), beta(3), gamma(1), delta(1), epsilon(1). CF(0) has three main subunits: a(1), b(2) and c(9-12). The alpha and beta chains form an alternating ring which encloses part of the gamma chain. CF(1) is attached to CF(0) by a central stalk formed by the gamma and epsilon chains, while a peripheral stalk is formed by the delta and b chains.

It localises to the cell membrane. It carries out the reaction ATP + H2O + 4 H(+)(in) = ADP + phosphate + 5 H(+)(out). Its function is as follows. Produces ATP from ADP in the presence of a proton gradient across the membrane. The alpha chain is a regulatory subunit. The chain is ATP synthase subunit alpha from Bifidobacterium animalis subsp. lactis (strain AD011).